A 441-amino-acid chain; its full sequence is Deoxyguanosinetriphosphate triphosphohydrolase-like protein 1 (441 aa).

The 194-residue stretch at 62–255 folds into the HD domain; sequence RLTHSLEAAQ…MELADDIAYG (194 aa).

It belongs to the dGTPase family. Type 2 subfamily.

The sequence is that of Deoxyguanosinetriphosphate triphosphohydrolase-like protein 1 from Vibrio cholerae serotype O1 (strain ATCC 39315 / El Tor Inaba N16961).